We begin with the raw amino-acid sequence, 242 residues long: LexA repressor (242 aa).

The H-T-H motif DNA-binding region spans Phe26–Ser46. Catalysis depends on for autocatalytic cleavage activity residues Ser163 and Lys201.

The protein belongs to the peptidase S24 family. As to quaternary structure, homodimer.

The catalysed reaction is Hydrolysis of Ala-|-Gly bond in repressor LexA.. Its function is as follows. Represses a number of genes involved in the response to DNA damage (SOS response), including recA and lexA. In the presence of single-stranded DNA, RecA interacts with LexA causing an autocatalytic cleavage which disrupts the DNA-binding part of LexA, leading to derepression of the SOS regulon and eventually DNA repair. The chain is LexA repressor from Granulibacter bethesdensis (strain ATCC BAA-1260 / CGDNIH1).